Reading from the N-terminus, the 108-residue chain is MLIVTTNEIPGYRIDEILGSVWGLTVRSRNIVSQFGAGLKSIFGGELRGMTTVLIDSRNQAMQRLVEEATARGANAILAMRFDTSEIGGMWTEICAYGTAARVSRLNS.

This sequence belongs to the UPF0145 family.

This is UPF0145 protein Acel_2109 from Acidothermus cellulolyticus (strain ATCC 43068 / DSM 8971 / 11B).